Here is a 321-residue protein sequence, read N- to C-terminus: Cytochrome c biogenesis protein CcsA (321 aa).

The next 8 membrane-spanning stretches (helical) occupy residues His12–Tyr32, Met45–Ser62, Leu71–Ile91, Leu98–Leu117, Met143–Ile163, Val227–Asn247, Glu260–Arg277, and Val292–Ile312.

Belongs to the CcmF/CycK/Ccl1/NrfE/CcsA family. In terms of assembly, may interact with Ccs1.

The protein localises to the plastid. It is found in the chloroplast thylakoid membrane. Required during biogenesis of c-type cytochromes (cytochrome c6 and cytochrome f) at the step of heme attachment. This chain is Cytochrome c biogenesis protein CcsA, found in Phalaenopsis aphrodite subsp. formosana (Moth orchid).